Reading from the N-terminus, the 508-residue chain is CUGBP Elav-like family member 2 (508 aa).

Necessary for RNA-binding, TNNT2 exon 5 and NMDA R1 exon 21 inclusion stretches follow at residues 1-283 and 357-508; these read MRCP…LQNL and LAGM…SKPY. RRM domains lie at 40 to 123, 132 to 212, and 423 to 501; these read IKMF…PADS, RKLF…FADT, and ANLF…LKRS.

It belongs to the CELF/BRUNOL family. As to quaternary structure, interacts with A1CF. As to expression, expressed in tongue, spleen and brain (at protein level). Expressed in liver, thigh, stomach, lung and heart to very low levels (at protein level). Expressed in heart, brain, lung and muscle.

It is found in the nucleus. The protein localises to the cytoplasm. Functionally, RNA-binding protein implicated in the regulation of several post-transcriptional events. Involved in pre-mRNA alternative splicing, mRNA translation and stability. Mediates exon inclusion and/or exclusion in pre-mRNA that are subject to tissue-specific and developmentally regulated alternative splicing. Specifically activates exon 5 inclusion of TNNT2 in embryonic, but not adult, skeletal muscle. Activates TNNT2 exon 5 inclusion by antagonizing the repressive effect of PTB. Acts both as an activator and as a repressor of a pair of coregulated exons: promotes inclusion of the smooth muscle (SM) exon but exclusion of the non-muscle (NM) exon in actinin pre-mRNAs. Promotes inclusion of exonS 21 and exclusion of exon 5 of the NMDA receptor R1 pre-mRNA. Involved in the apoB RNA editing activity. Increases COX2 mRNA stability and inhibits COX2 mRNA translation in epithelial cells after radiation injury. Modulates the cellular apoptosis program by regulating COX2-mediated prostaglandin E2 (PGE2) expression. Binds to (CUG)n triplet repeats in the 3'-UTR of transcripts such as DMPK. Binds to the muscle-specific splicing enhancer (MSE) intronic sites flanking the TNNT2 alternative exon 5. Binds preferentially to UG-rich sequences, in particular UG repeat and UGUU motifs. Binds to apoB mRNA, specifically to AU-rich sequences located immediately upstream of the edited cytidine. Binds AU-rich sequences in the 3'-UTR of COX2 mRNA. Binds to an intronic RNA element responsible for the silencing of exon 21 splicing. Binds to (CUG)n repeats. May be a specific regulator of miRNA biogenesis. Binds to primary microRNA pri-MIR140 and, with CELF1, negatively regulates the processing to mature miRNA. This Mus musculus (Mouse) protein is CUGBP Elav-like family member 2 (Celf2).